The primary structure comprises 368 residues: DNA replication and repair protein RecF (368 aa).

Residue 30-37 participates in ATP binding; sequence GNNAQGKT.

This sequence belongs to the RecF family.

It localises to the cytoplasm. Functionally, the RecF protein is involved in DNA metabolism; it is required for DNA replication and normal SOS inducibility. RecF binds preferentially to single-stranded, linear DNA. It also seems to bind ATP. The chain is DNA replication and repair protein RecF from Streptococcus pyogenes serotype M6 (strain ATCC BAA-946 / MGAS10394).